The chain runs to 205 residues: Ribonuclease HII (205 aa).

Residues 13–205 (TIVAGVDEVG…APVKYMLSMC (193 aa)) enclose the RNase H type-2 domain. D19, E20, and D114 together coordinate a divalent metal cation.

This sequence belongs to the RNase HII family. Requires Mn(2+) as cofactor. Mg(2+) serves as cofactor.

The protein resides in the cytoplasm. The enzyme catalyses Endonucleolytic cleavage to 5'-phosphomonoester.. Endonuclease that specifically degrades the RNA of RNA-DNA hybrids. In Blochmanniella floridana, this protein is Ribonuclease HII.